A 549-amino-acid polypeptide reads, in one-letter code: Glucose-6-phosphate isomerase (549 aa).

E353 serves as the catalytic Proton donor. Catalysis depends on residues H384 and K513.

It belongs to the GPI family.

It localises to the cytoplasm. The catalysed reaction is alpha-D-glucose 6-phosphate = beta-D-fructose 6-phosphate. The protein operates within carbohydrate biosynthesis; gluconeogenesis. It functions in the pathway carbohydrate degradation; glycolysis; D-glyceraldehyde 3-phosphate and glycerone phosphate from D-glucose: step 2/4. Functionally, catalyzes the reversible isomerization of glucose-6-phosphate to fructose-6-phosphate. The sequence is that of Glucose-6-phosphate isomerase from Brucella abortus (strain S19).